The following is a 324-amino-acid chain: Protoheme IX farnesyltransferase 2 (324 aa).

A run of 9 helical transmembrane segments spans residues 39–59, 63–83, 115–135, 137–157, 166–186, 192–212, 239–259, 260–280, and 302–322; these read LIKPRVIELLLVTTIPAMLLA, IPSPWLVIATLVGGTMAAGSA, HALVFGIALGAGSFGWLWATT, LLSAVLAVATILFYVFVYTLV, IVWGGAAGCMPVVIGWAGVTG, ALVMFGIIFFWTPPHTWSLAM, IVVFTWLMVLWTLLLAPATGW, LYTAFAIAAGAWFLVLAHRLH, and LMIVCVALAVDSALSLPVLGW.

Belongs to the UbiA prenyltransferase family. Protoheme IX farnesyltransferase subfamily.

It is found in the cell membrane. It carries out the reaction heme b + (2E,6E)-farnesyl diphosphate + H2O = Fe(II)-heme o + diphosphate. Its pathway is porphyrin-containing compound metabolism; heme O biosynthesis; heme O from protoheme: step 1/1. Converts heme B (protoheme IX) to heme O by substitution of the vinyl group on carbon 2 of heme B porphyrin ring with a hydroxyethyl farnesyl side group. The polypeptide is Protoheme IX farnesyltransferase 2 (Saccharopolyspora erythraea (strain ATCC 11635 / DSM 40517 / JCM 4748 / NBRC 13426 / NCIMB 8594 / NRRL 2338)).